The sequence spans 347 residues: NADH-ubiquinone oxidoreductase chain 2 (347 aa).

Helical transmembrane passes span 3–23 (PPIL…VLTS), 25–45 (HWLL…PILM), 60–80 (FLTQ…NLMF), 96–116 (GLVT…FWVP), 122–142 (ISLS…LSVL), 153–173 (LLIT…LNQT), 178–198 (ILAY…TYNP), 200–220 (LMVL…MLFM), 237–257 (LPLM…LPPL), 274–294 (DMII…YFYM), and 323–343 (IILL…TPMM).

Belongs to the complex I subunit 2 family. Core subunit of respiratory chain NADH dehydrogenase (Complex I) which is composed of 45 different subunits. Interacts with TMEM242.

It localises to the mitochondrion inner membrane. The catalysed reaction is a ubiquinone + NADH + 5 H(+)(in) = a ubiquinol + NAD(+) + 4 H(+)(out). Functionally, core subunit of the mitochondrial membrane respiratory chain NADH dehydrogenase (Complex I) which catalyzes electron transfer from NADH through the respiratory chain, using ubiquinone as an electron acceptor. Essential for the catalytic activity and assembly of complex I. This is NADH-ubiquinone oxidoreductase chain 2 from Phoca vitulina (Harbor seal).